The chain runs to 82 residues: 4-(gamma-L-glutamylamino)butanoyl-[BtrI acyl-carrier protein] monooxygenase BtrO (82 aa).

In terms of assembly, homotetramer.

It catalyses the reaction 4-(gamma-L-glutamylamino)butanoyl-[BtrI ACP] + FMNH2 + O2 = 4-(gamma-L-glutamylamino)-(2S)-2-hydroxybutanoyl-[BtrI ACP] + FMN + H2O + H(+). The protein operates within antibiotic biosynthesis; butirosin biosynthesis. NAD(P)H:FMN oxidoreductase component of a two-component system involved in the biosynthesis of the side chain of the aminoglycoside antibiotics in the biosynthetic pathway of butirosin. Together with BtrO, mediates hydroxylation of gamma-L-Glu-GABA-S-BtrI. This chain is 4-(gamma-L-glutamylamino)butanoyl-[BtrI acyl-carrier protein] monooxygenase BtrO (btrV), found in Niallia circulans (Bacillus circulans).